We begin with the raw amino-acid sequence, 325 residues long: Transaldolase (325 aa).

Lys-125 (schiff-base intermediate with substrate) is an active-site residue.

Belongs to the transaldolase family. Type 2 subfamily.

The protein resides in the cytoplasm. It carries out the reaction D-sedoheptulose 7-phosphate + D-glyceraldehyde 3-phosphate = D-erythrose 4-phosphate + beta-D-fructose 6-phosphate. Its pathway is carbohydrate degradation; pentose phosphate pathway; D-glyceraldehyde 3-phosphate and beta-D-fructose 6-phosphate from D-ribose 5-phosphate and D-xylulose 5-phosphate (non-oxidative stage): step 2/3. Transaldolase is important for the balance of metabolites in the pentose-phosphate pathway. The sequence is that of Transaldolase from Campylobacter jejuni subsp. doylei (strain ATCC BAA-1458 / RM4099 / 269.97).